We begin with the raw amino-acid sequence, 259 residues long: UPF0246 protein PFL_1025 (259 aa).

Belongs to the UPF0246 family.

The chain is UPF0246 protein PFL_1025 from Pseudomonas fluorescens (strain ATCC BAA-477 / NRRL B-23932 / Pf-5).